The following is a 637-amino-acid chain: DNA mismatch repair protein MutL (637 aa).

Disordered regions lie at residues 352 to 384 and 405 to 430; these read DDFT…NVLF and ASVE…AMEQ.

Belongs to the DNA mismatch repair MutL/HexB family.

This protein is involved in the repair of mismatches in DNA. It is required for dam-dependent methyl-directed DNA mismatch repair. May act as a 'molecular matchmaker', a protein that promotes the formation of a stable complex between two or more DNA-binding proteins in an ATP-dependent manner without itself being part of a final effector complex. In Halalkalibacterium halodurans (strain ATCC BAA-125 / DSM 18197 / FERM 7344 / JCM 9153 / C-125) (Bacillus halodurans), this protein is DNA mismatch repair protein MutL.